The following is a 439-amino-acid chain: Ornithine aminotransferase, mitochondrial (439 aa).

A mitochondrion-targeting transit peptide spans 1-25 (MLSKLARLQTVAGLGLGVHSSVASA). 2 positions are modified to N6-acetyllysine: Lys49 and Lys66. At Lys102 the chain carries N6-succinyllysine. Lys107 is modified (N6-acetyllysine; alternate). N6-succinyllysine; alternate is present on Lys107. Lys292 is modified (N6-(pyridoxal phosphate)lysine). Lys362 bears the N6-acetyllysine; alternate mark. N6-succinyllysine; alternate is present on Lys362. N6-acetyllysine occurs at positions 386 and 392. Lys405 bears the N6-acetyllysine; alternate mark. Lys405 bears the N6-succinyllysine; alternate mark. An N6-acetyllysine modification is found at Lys421.

The protein belongs to the class-III pyridoxal-phosphate-dependent aminotransferase family. As to quaternary structure, homohexamer. It depends on pyridoxal 5'-phosphate as a cofactor.

Its subcellular location is the mitochondrion matrix. The catalysed reaction is L-ornithine + 2-oxoglutarate = L-glutamate 5-semialdehyde + L-glutamate. The protein operates within amino-acid biosynthesis; L-proline biosynthesis; L-glutamate 5-semialdehyde from L-ornithine: step 1/1. In terms of biological role, catalyzes the reversible interconversion of L-ornithine and 2-oxoglutarate to L-glutamate semialdehyde and L-glutamate. In Bos taurus (Bovine), this protein is Ornithine aminotransferase, mitochondrial (OAT).